Reading from the N-terminus, the 265-residue chain is Ribosomal RNA small subunit methyltransferase A (265 aa).

S-adenosyl-L-methionine is bound by residues Asn-13, Leu-15, Gly-40, Glu-61, Asp-85, and Asn-103.

The protein belongs to the class I-like SAM-binding methyltransferase superfamily. rRNA adenine N(6)-methyltransferase family. RsmA subfamily.

Its subcellular location is the cytoplasm. The enzyme catalyses adenosine(1518)/adenosine(1519) in 16S rRNA + 4 S-adenosyl-L-methionine = N(6)-dimethyladenosine(1518)/N(6)-dimethyladenosine(1519) in 16S rRNA + 4 S-adenosyl-L-homocysteine + 4 H(+). Functionally, specifically dimethylates two adjacent adenosines (A1518 and A1519) in the loop of a conserved hairpin near the 3'-end of 16S rRNA in the 30S particle. May play a critical role in biogenesis of 30S subunits. The sequence is that of Ribosomal RNA small subunit methyltransferase A from Aromatoleum aromaticum (strain DSM 19018 / LMG 30748 / EbN1) (Azoarcus sp. (strain EbN1)).